A 513-amino-acid chain; its full sequence is ATP synthase subunit alpha (513 aa).

169-176 (GDRQTGKT) contacts ATP.

It belongs to the ATPase alpha/beta chains family. In terms of assembly, F-type ATPases have 2 components, CF(1) - the catalytic core - and CF(0) - the membrane proton channel. CF(1) has five subunits: alpha(3), beta(3), gamma(1), delta(1), epsilon(1). CF(0) has three main subunits: a(1), b(2) and c(9-12). The alpha and beta chains form an alternating ring which encloses part of the gamma chain. CF(1) is attached to CF(0) by a central stalk formed by the gamma and epsilon chains, while a peripheral stalk is formed by the delta and b chains.

The protein resides in the cell inner membrane. The enzyme catalyses ATP + H2O + 4 H(+)(in) = ADP + phosphate + 5 H(+)(out). Produces ATP from ADP in the presence of a proton gradient across the membrane. The alpha chain is a regulatory subunit. The chain is ATP synthase subunit alpha from Ralstonia pickettii (strain 12J).